Reading from the N-terminus, the 303-residue chain is Pyridoxal 5'-phosphate synthase subunit PdxS (303 aa).

Residue D33 coordinates D-ribose 5-phosphate. K90 acts as the Schiff-base intermediate with D-ribose 5-phosphate in catalysis. Residue G162 coordinates D-ribose 5-phosphate. R174 is a binding site for D-glyceraldehyde 3-phosphate. Residues G223 and 244–245 (GS) each bind D-ribose 5-phosphate.

This sequence belongs to the PdxS/SNZ family. As to quaternary structure, in the presence of PdxT, forms a dodecamer of heterodimers.

The enzyme catalyses aldehydo-D-ribose 5-phosphate + D-glyceraldehyde 3-phosphate + L-glutamine = pyridoxal 5'-phosphate + L-glutamate + phosphate + 3 H2O + H(+). Its pathway is cofactor biosynthesis; pyridoxal 5'-phosphate biosynthesis. Its function is as follows. Catalyzes the formation of pyridoxal 5'-phosphate from ribose 5-phosphate (RBP), glyceraldehyde 3-phosphate (G3P) and ammonia. The ammonia is provided by the PdxT subunit. Can also use ribulose 5-phosphate and dihydroxyacetone phosphate as substrates, resulting from enzyme-catalyzed isomerization of RBP and G3P, respectively. This chain is Pyridoxal 5'-phosphate synthase subunit PdxS, found in Streptomyces coelicolor (strain ATCC BAA-471 / A3(2) / M145).